Consider the following 360-residue polypeptide: Protein Wnt-2 (360 aa).

The N-terminal stretch at 1–25 is a signal peptide; it reads MNAPLGGIWPWLPLLLTWLTPEVSS. 11 disulfides stabilise this stretch: Cys-76–Cys-87, Cys-127–Cys-135, Cys-137–Cys-157, Cys-206–Cys-220, Cys-208–Cys-215, Cys-278–Cys-309, Cys-294–Cys-304, Cys-308–Cys-348, Cys-324–Cys-339, Cys-326–Cys-336, and Cys-331–Cys-332. Ser-212 is lipidated: O-palmitoleoyl serine; by PORCN. Asn-295 carries N-linked (GlcNAc...) asparagine glycosylation.

The protein belongs to the Wnt family. Palmitoleoylation is required for efficient binding to frizzled receptors. Depalmitoleoylation leads to Wnt signaling pathway inhibition.

Its subcellular location is the secreted. It is found in the extracellular space. It localises to the extracellular matrix. Functionally, ligand for members of the frizzled family of seven transmembrane receptors. Functions in the canonical Wnt signaling pathway that results in activation of transcription factors of the TCF/LEF family. Functions as a upstream regulator of FGF10 expression. Plays an important role in embryonic lung development. May contribute to embryonic brain development by regulating the proliferation of dopaminergic precursors and neurons. This is Protein Wnt-2 (WNT2) from Felis catus (Cat).